The following is a 563-amino-acid chain: Cystathionine gamma-synthase 1, chloroplastic (563 aa).

Residues 1–68 (MAVSSFQCPT…SRILRFPPNF (68 aa)) constitute a chloroplast transit peptide. Residues tyrosine 226, arginine 228, glycine 256, methionine 257, tyrosine 281, serine 376, and threonine 378 each coordinate pyridoxal 5'-phosphate. Lysine 379 is modified (N6-(pyridoxal phosphate)lysine).

This sequence belongs to the trans-sulfuration enzymes family. The cofactor is pyridoxal 5'-phosphate.

The protein resides in the plastid. Its subcellular location is the chloroplast. The enzyme catalyses O-phospho-L-homoserine + L-cysteine = L,L-cystathionine + phosphate. It catalyses the reaction O-succinyl-L-homoserine + L-cysteine = L,L-cystathionine + succinate + H(+). The protein operates within amino-acid biosynthesis; L-methionine biosynthesis via de novo pathway; L-cystathionine from O-succinyl-L-homoserine: step 1/1. With respect to regulation, inhibited by propargylglycine. Functionally, catalyzes the first committed step of methionine (Met) biosynthesis. Catalyzes the formation of L-cystathionine from homoserine esters and L-cysteine, via a gamma-replacement reaction. Substrate preference for cystathionine synthesis is O-phospho-L-homoserine (OPH) &gt; O(4)-succinyl-L-homoserine (OSH) &gt;&gt; O-acetyl-L-homoserine (OAH). Is able, at extremely low rate, to catalyze a gamma-elimination of OPH in the absence of cysteine to produce inorganic phosphate (Pi), 2-oxobutanoate and ammonia. In Arabidopsis thaliana (Mouse-ear cress), this protein is Cystathionine gamma-synthase 1, chloroplastic.